Here is a 478-residue protein sequence, read N- to C-terminus: MNLTHIWKTTLSALQSQTSRHDYEALLRPAMLLSLDNGIARIGVSSPIQKEGLENRLLMPLRNALTRVVGYPVQVQVLIANQALRPEVTAAPRNGTHVALEPEPFVTEPPTPAFTSGNGNGERAVQLDLASAMRSGMLNPRYTFASFIVGSSNRLAHAACLAVADNPGQAYNPLFLYGGVGLGKTHLLHAIGNRVLDRDPEINVLYVSSEKFTNDLINAIRRQQTEEFRMRYRNIDVLLIDDIQFIAGKDATQEEFFHTFNTLHSAAKHIVISSDRPPKAILTLEERLRSRFEWGLIVDVQPPDLETRTAILRAKAEQMSVHVPDEVIDFLAHKIQSNIRELEGSLNRVAAYAELNRLPITIDTATAALADLLGNQRRRRISAEAILQIVSEHYGIEVEQLRARNRSRHVVVPRQVAMYLLREETESSLVDIGNLLGGRDHTTVMYGCEKIAEEINTDSHLRSEVMAIRERIQMMRGL.

The segment at M1–Y71 is domain I, interacts with DnaA modulators. The segment at Y71–G136 is domain II. The interval M137–A353 is domain III, AAA+ region. ATP-binding residues include G181, G183, K184, and T185. Residues E354–L478 form a domain IV, binds dsDNA region.

Belongs to the DnaA family. In terms of assembly, oligomerizes as a right-handed, spiral filament on DNA at oriC.

It is found in the cytoplasm. In terms of biological role, plays an essential role in the initiation and regulation of chromosomal replication. ATP-DnaA binds to the origin of replication (oriC) to initiate formation of the DNA replication initiation complex once per cell cycle. Binds the DnaA box (a 9 base pair repeat at the origin) and separates the double-stranded (ds)DNA. Forms a right-handed helical filament on oriC DNA; dsDNA binds to the exterior of the filament while single-stranded (ss)DNA is stabiized in the filament's interior. The ATP-DnaA-oriC complex binds and stabilizes one strand of the AT-rich DNA unwinding element (DUE), permitting loading of DNA polymerase. After initiation quickly degrades to an ADP-DnaA complex that is not apt for DNA replication. Binds acidic phospholipids. This chain is Chromosomal replication initiator protein DnaA, found in Chloroflexus aggregans (strain MD-66 / DSM 9485).